The chain runs to 158 residues: Endoribonuclease YbeY (158 aa).

Residues histidine 121, histidine 125, and histidine 131 each contribute to the Zn(2+) site.

The protein belongs to the endoribonuclease YbeY family. Zn(2+) is required as a cofactor.

It is found in the cytoplasm. Single strand-specific metallo-endoribonuclease involved in late-stage 70S ribosome quality control and in maturation of the 3' terminus of the 16S rRNA. In Exiguobacterium sibiricum (strain DSM 17290 / CCUG 55495 / CIP 109462 / JCM 13490 / 255-15), this protein is Endoribonuclease YbeY.